Consider the following 166-residue polypeptide: NADH-quinone oxidoreductase subunit A (166 aa).

3 helical membrane passes run 16–36, 68–88, and 98–118; these read FAVFLIGAVGLCGLMLLGAYF, FYLVAMFFVIFDVEALYLYAW, and IGFIEAVIFILVLLAGLFYLV. Residues 141-166 are disordered; that stretch reads RYASSHPQDISQELSVAGSQQANESR.

This sequence belongs to the complex I subunit 3 family. In terms of assembly, NDH-1 is composed of 13 different subunits. Subunits NuoA, H, J, K, L, M, N constitute the membrane sector of the complex.

It is found in the cell inner membrane. The enzyme catalyses a quinone + NADH + 5 H(+)(in) = a quinol + NAD(+) + 4 H(+)(out). NDH-1 shuttles electrons from NADH, via FMN and iron-sulfur (Fe-S) centers, to quinones in the respiratory chain. The immediate electron acceptor for the enzyme in this species is believed to be ubiquinone. Couples the redox reaction to proton translocation (for every two electrons transferred, four hydrogen ions are translocated across the cytoplasmic membrane), and thus conserves the redox energy in a proton gradient. The chain is NADH-quinone oxidoreductase subunit A from Yersinia pseudotuberculosis serotype IB (strain PB1/+).